The following is a 284-amino-acid chain: ELMO domain-containing protein B (284 aa).

Residues 124–276 enclose the ELMO domain; sequence EHEASLERLW…EFETKISQNS (153 aa).

The protein is ELMO domain-containing protein B (elmoB) of Dictyostelium discoideum (Social amoeba).